Reading from the N-terminus, the 367-residue chain is Viral cathepsin (367 aa).

The signal sequence occupies residues 1 to 25 (MRKYHSNIMHKIITFVSLLWTFVVC). A propeptide spans 26–156 (DEISLHTSSS…IVKGAPDIRL (131 aa)) (activation peptide). N-linked (GlcNAc...) asparagine; by host glycosylation is found at Asn103 and Asn135. Disulfide bonds link Cys177–Cys218, Cys211–Cys251, and Cys306–Cys354. Cys180 is a catalytic residue. Catalysis depends on residues His313 and Asn333.

This sequence belongs to the peptidase C1 family. Synthesized as an inactive proenzyme and activated by proteolytic removal of the inhibitory propeptide.

It catalyses the reaction Endopeptidase of broad specificity, hydrolyzing substrates of both cathepsin L and cathepsin B.. In terms of biological role, cysteine protease that plays an essential role in host liquefaction to facilitate horizontal transmission of the virus. May participate in the degradation of foreign protein expressed by the baculovirus system. This chain is Viral cathepsin (VCATH), found in Lepidoptera (butterflies and moths).